A 548-amino-acid polypeptide reads, in one-letter code: Chaperonin GroEL (548 aa).

ATP is bound by residues 30-33 (TLGP), lysine 51, 87-91 (DGTTT), glycine 415, and aspartate 495.

The protein belongs to the chaperonin (HSP60) family. Forms a cylinder of 14 subunits composed of two heptameric rings stacked back-to-back. Interacts with the co-chaperonin GroES.

It localises to the cytoplasm. It catalyses the reaction ATP + H2O + a folded polypeptide = ADP + phosphate + an unfolded polypeptide.. Its function is as follows. Together with its co-chaperonin GroES, plays an essential role in assisting protein folding. The GroEL-GroES system forms a nano-cage that allows encapsulation of the non-native substrate proteins and provides a physical environment optimized to promote and accelerate protein folding. The polypeptide is Chaperonin GroEL (Photorhabdus laumondii subsp. laumondii (strain DSM 15139 / CIP 105565 / TT01) (Photorhabdus luminescens subsp. laumondii)).